The sequence spans 76 residues: MAYRESFYRYLMTQRDADSSDEIAQFANNAQHDLTFPKQEQDYEKLSDYLELNASYLPSMYIFDRAYRMYEDKMMY.

It belongs to the UPF0346 family.

This chain is UPF0346 protein lhv_1069, found in Lactobacillus helveticus (strain DPC 4571).